Consider the following 414-residue polypeptide: eIF5-mimic protein 1 (414 aa).

Residues 1 to 22 (MNKNQKPVLTGQRFKTRKRDEK) form a disordered region. The W2 domain occupies 248–414 (VQQSLGTRKE…LQNAEEEFRI (167 aa)).

The protein belongs to the BZW family.

The protein resides in the cytoplasm. Functionally, translation initiation regulator which may repress non-AUG initiated translation and repeat-associated non-AUG (RAN) initiated translation by acting as a competitive inhibitor of eukaryotic translation initiation factor 5 (EIF5) function. The protein is eIF5-mimic protein 1 (BZW2) of Gallus gallus (Chicken).